The sequence spans 270 residues: Type III pantothenate kinase (270 aa).

6–13 (DAGNTNIV) provides a ligand contact to ATP. 107–110 (GADR) is a binding site for substrate. The active-site Proton acceptor is the aspartate 109. Position 129 (aspartate 129) interacts with K(+). Position 132 (threonine 132) interacts with ATP. Residue threonine 184 participates in substrate binding.

Belongs to the type III pantothenate kinase family. As to quaternary structure, homodimer. Requires NH4(+) as cofactor. It depends on K(+) as a cofactor.

Its subcellular location is the cytoplasm. The enzyme catalyses (R)-pantothenate + ATP = (R)-4'-phosphopantothenate + ADP + H(+). The protein operates within cofactor biosynthesis; coenzyme A biosynthesis; CoA from (R)-pantothenate: step 1/5. Functionally, catalyzes the phosphorylation of pantothenate (Pan), the first step in CoA biosynthesis. This Gluconobacter oxydans (strain 621H) (Gluconobacter suboxydans) protein is Type III pantothenate kinase.